Here is a 67-residue protein sequence, read N- to C-terminus: Protein C' (67 aa).

It belongs to the rhabdoviruses C protein family.

In terms of biological role, seems to stimulates transcription by the viral polymerase. May play a role in viral pathogenesis or transmission by insects vectors. In Vesicular stomatitis Indiana virus (strain 85CLB South America) (VSIV), this protein is Protein C' (P).